A 489-amino-acid chain; its full sequence is Serine/arginine-rich splicing factor 4 (489 aa).

Residues 2–72 (PRVYIGRLSY…ERVIVEHARG (71 aa)) enclose the RRM 1 domain. Disordered stretches follow at residues 72–95 (GPRR…GRDK) and 169–489 (KIRL…HSRS). Serine 78 and serine 84 each carry phosphoserine. The RRM 2 domain occupies 104-177 (YRLIVENLSS…RKIRLVEDKP (74 aa)). Basic residues-rich tracts occupy residues 179 to 206 (SRRR…KSRS) and 214 to 246 (SHSK…KKEK). Positions 247 to 279 (SRSPSKDNKSRSRSRSPDKSRSKSKDHAEDKLQ) are enriched in basic and acidic residues. 3 positions are modified to phosphoserine: serine 289, serine 291, and serine 293. Basic and acidic residues predominate over residues 293-332 (SRHDSKSRSRSQERRAEEERRRSVSRARSQEKSRSQEKSL). A compositionally biased stretch (basic residues) spans 333-356 (LKSRSRSRSRSRSRSKDKRKGRKR). Basic and acidic residues-rich tracts occupy residues 357 to 370 (SRDE…SKSE) and 394 to 426 (KDTD…RAEG). Residues serine 441, serine 453, and serine 455 each carry the phosphoserine modification. Composition is skewed to basic residues over residues 456 to 469 (RSKS…RSKS) and 479 to 489 (SRSRSRSHSRS).

This sequence belongs to the splicing factor SR family. In terms of assembly, found in a pre-mRNA splicing complex with SRSF4/SFRS4, SRSF5/SFRS5, SNRNP70, SNRPA1, SRRM1 and SRRM2. Interacts with PNN. Post-translationally, extensively phosphorylated on serine residues in the RS domain.

The protein localises to the nucleus speckle. Plays a role in alternative splice site selection during pre-mRNA splicing. Represses the splicing of MAPT/Tau exon 10. This Mus musculus (Mouse) protein is Serine/arginine-rich splicing factor 4 (Srsf4).